An 84-amino-acid polypeptide reads, in one-letter code: Putative membrane protein insertion efficiency factor (84 aa).

Positions G64–E84 are disordered. Residues H75 to E84 are compositionally biased toward basic residues.

This sequence belongs to the UPF0161 family.

The protein localises to the cell inner membrane. Functionally, could be involved in insertion of integral membrane proteins into the membrane. This chain is Putative membrane protein insertion efficiency factor, found in Caulobacter vibrioides (strain ATCC 19089 / CIP 103742 / CB 15) (Caulobacter crescentus).